The following is a 127-amino-acid chain: Small ribosomal subunit protein uS13 (127 aa).

The interval 92–127 (HRQGLPVRGQRTRTNARTRRGRRLTVAGKKKAPSKK) is disordered. A compositionally biased stretch (basic residues) spans 101 to 127 (QRTRTNARTRRGRRLTVAGKKKAPSKK).

This sequence belongs to the universal ribosomal protein uS13 family. In terms of assembly, part of the 30S ribosomal subunit. Forms a loose heterodimer with protein S19. Forms two bridges to the 50S subunit in the 70S ribosome.

In terms of biological role, located at the top of the head of the 30S subunit, it contacts several helices of the 16S rRNA. In the 70S ribosome it contacts the 23S rRNA (bridge B1a) and protein L5 of the 50S subunit (bridge B1b), connecting the 2 subunits; these bridges are implicated in subunit movement. Contacts the tRNAs in the A and P-sites. This chain is Small ribosomal subunit protein uS13, found in Gloeothece citriformis (strain PCC 7424) (Cyanothece sp. (strain PCC 7424)).